The chain runs to 444 residues: Probable glycine dehydrogenase (decarboxylating) subunit 1 (444 aa).

Belongs to the GcvP family. N-terminal subunit subfamily. The glycine cleavage system is composed of four proteins: P, T, L and H. In this organism, the P 'protein' is a heterodimer of two subunits.

It catalyses the reaction N(6)-[(R)-lipoyl]-L-lysyl-[glycine-cleavage complex H protein] + glycine + H(+) = N(6)-[(R)-S(8)-aminomethyldihydrolipoyl]-L-lysyl-[glycine-cleavage complex H protein] + CO2. Its function is as follows. The glycine cleavage system catalyzes the degradation of glycine. The P protein binds the alpha-amino group of glycine through its pyridoxal phosphate cofactor; CO(2) is released and the remaining methylamine moiety is then transferred to the lipoamide cofactor of the H protein. This chain is Probable glycine dehydrogenase (decarboxylating) subunit 1, found in Moorella thermoacetica (strain ATCC 39073 / JCM 9320).